We begin with the raw amino-acid sequence, 266 residues long: Undecaprenyl-diphosphatase (266 aa).

The next 7 helical transmembrane spans lie at 39 to 59, 86 to 106, 112 to 132, 153 to 173, 189 to 209, 216 to 236, and 246 to 266; these read PGSS…VWYF, SIFI…LFVP, VLRS…FMYL, LIGF…GITI, FSFL…FIFS, IGFL…LLAI, and NGLK…LLNL.

The protein belongs to the UppP family.

The protein localises to the cell inner membrane. It carries out the reaction di-trans,octa-cis-undecaprenyl diphosphate + H2O = di-trans,octa-cis-undecaprenyl phosphate + phosphate + H(+). Its function is as follows. Catalyzes the dephosphorylation of undecaprenyl diphosphate (UPP). Confers resistance to bacitracin. In Prochlorococcus marinus (strain MIT 9215), this protein is Undecaprenyl-diphosphatase.